The following is a 359-amino-acid chain: Peptide chain release factor 1 (359 aa).

The residue at position 235 (Q235) is an N5-methylglutamine.

The protein belongs to the prokaryotic/mitochondrial release factor family. Methylated by PrmC. Methylation increases the termination efficiency of RF1.

It localises to the cytoplasm. In terms of biological role, peptide chain release factor 1 directs the termination of translation in response to the peptide chain termination codons UAG and UAA. The protein is Peptide chain release factor 1 of Anaplasma marginale (strain Florida).